The following is a 104-amino-acid chain: Flagellar hook-basal body complex protein FliE (104 aa).

It belongs to the FliE family.

Its subcellular location is the bacterial flagellum basal body. The chain is Flagellar hook-basal body complex protein FliE from Salmonella newport (strain SL254).